We begin with the raw amino-acid sequence, 208 residues long: Thymidylate kinase (208 aa).

ATP is bound at residue 10–17; sequence GPEGSGKT.

Belongs to the thymidylate kinase family.

The enzyme catalyses dTMP + ATP = dTDP + ADP. Its function is as follows. Phosphorylation of dTMP to form dTDP in both de novo and salvage pathways of dTTP synthesis. The sequence is that of Thymidylate kinase from Bacillus mycoides (strain KBAB4) (Bacillus weihenstephanensis).